Consider the following 513-residue polypeptide: ATP synthase subunit alpha (513 aa).

170-177 (GDRQTGKT) provides a ligand contact to ATP.

Belongs to the ATPase alpha/beta chains family. In terms of assembly, F-type ATPases have 2 components, CF(1) - the catalytic core - and CF(0) - the membrane proton channel. CF(1) has five subunits: alpha(3), beta(3), gamma(1), delta(1), epsilon(1). CF(0) has four main subunits: a(1), b(1), b'(1) and c(9-12).

It localises to the cell inner membrane. It carries out the reaction ATP + H2O + 4 H(+)(in) = ADP + phosphate + 5 H(+)(out). Functionally, produces ATP from ADP in the presence of a proton gradient across the membrane. The alpha chain is a regulatory subunit. This Gloeobacter violaceus (strain ATCC 29082 / PCC 7421) protein is ATP synthase subunit alpha.